The chain runs to 354 residues: Ribosomal RNA large subunit methyltransferase M (354 aa).

Residues S183, 216–219, D235, D255, and D271 each bind S-adenosyl-L-methionine; that span reads SPGG. The Proton acceptor role is filled by K300.

It belongs to the class I-like SAM-binding methyltransferase superfamily. RNA methyltransferase RlmE family. RlmM subfamily. As to quaternary structure, monomer.

It is found in the cytoplasm. The enzyme catalyses cytidine(2498) in 23S rRNA + S-adenosyl-L-methionine = 2'-O-methylcytidine(2498) in 23S rRNA + S-adenosyl-L-homocysteine + H(+). Its function is as follows. Catalyzes the 2'-O-methylation at nucleotide C2498 in 23S rRNA. This is Ribosomal RNA large subunit methyltransferase M from Pseudomonas putida (strain ATCC 47054 / DSM 6125 / CFBP 8728 / NCIMB 11950 / KT2440).